A 323-amino-acid polypeptide reads, in one-letter code: 4-hydroxy-3-methylbut-2-enyl diphosphate reductase (323 aa).

Cys13 lines the [4Fe-4S] cluster pocket. (2E)-4-hydroxy-3-methylbut-2-enyl diphosphate is bound by residues His42 and His75. Residues His42 and His75 each contribute to the dimethylallyl diphosphate site. Positions 42 and 75 each coordinate isopentenyl diphosphate. Cys97 contacts [4Fe-4S] cluster. His125 is a (2E)-4-hydroxy-3-methylbut-2-enyl diphosphate binding site. His125 provides a ligand contact to dimethylallyl diphosphate. An isopentenyl diphosphate-binding site is contributed by His125. Glu127 (proton donor) is an active-site residue. Thr168 contacts (2E)-4-hydroxy-3-methylbut-2-enyl diphosphate. Position 198 (Cys198) interacts with [4Fe-4S] cluster. 4 residues coordinate (2E)-4-hydroxy-3-methylbut-2-enyl diphosphate: Ser226, Ser227, Asn228, and Ser270. 4 residues coordinate dimethylallyl diphosphate: Ser226, Ser227, Asn228, and Ser270. Residues Ser226, Ser227, Asn228, and Ser270 each contribute to the isopentenyl diphosphate site.

The protein belongs to the IspH family. Requires [4Fe-4S] cluster as cofactor.

It carries out the reaction isopentenyl diphosphate + 2 oxidized [2Fe-2S]-[ferredoxin] + H2O = (2E)-4-hydroxy-3-methylbut-2-enyl diphosphate + 2 reduced [2Fe-2S]-[ferredoxin] + 2 H(+). The enzyme catalyses dimethylallyl diphosphate + 2 oxidized [2Fe-2S]-[ferredoxin] + H2O = (2E)-4-hydroxy-3-methylbut-2-enyl diphosphate + 2 reduced [2Fe-2S]-[ferredoxin] + 2 H(+). It participates in isoprenoid biosynthesis; dimethylallyl diphosphate biosynthesis; dimethylallyl diphosphate from (2E)-4-hydroxy-3-methylbutenyl diphosphate: step 1/1. Its pathway is isoprenoid biosynthesis; isopentenyl diphosphate biosynthesis via DXP pathway; isopentenyl diphosphate from 1-deoxy-D-xylulose 5-phosphate: step 6/6. Functionally, catalyzes the conversion of 1-hydroxy-2-methyl-2-(E)-butenyl 4-diphosphate (HMBPP) into a mixture of isopentenyl diphosphate (IPP) and dimethylallyl diphosphate (DMAPP). Acts in the terminal step of the DOXP/MEP pathway for isoprenoid precursor biosynthesis. The chain is 4-hydroxy-3-methylbut-2-enyl diphosphate reductase from Nitrosomonas europaea (strain ATCC 19718 / CIP 103999 / KCTC 2705 / NBRC 14298).